A 271-amino-acid chain; its full sequence is Ribosomal RNA small subunit methyltransferase A (271 aa).

Residues H11, L13, G38, E58, D86, and N101 each contribute to the S-adenosyl-L-methionine site.

The protein belongs to the class I-like SAM-binding methyltransferase superfamily. rRNA adenine N(6)-methyltransferase family. RsmA subfamily.

It localises to the cytoplasm. The enzyme catalyses adenosine(1518)/adenosine(1519) in 16S rRNA + 4 S-adenosyl-L-methionine = N(6)-dimethyladenosine(1518)/N(6)-dimethyladenosine(1519) in 16S rRNA + 4 S-adenosyl-L-homocysteine + 4 H(+). In terms of biological role, specifically dimethylates two adjacent adenosines (A1518 and A1519) in the loop of a conserved hairpin near the 3'-end of 16S rRNA in the 30S particle. May play a critical role in biogenesis of 30S subunits. The polypeptide is Ribosomal RNA small subunit methyltransferase A (Helicobacter pylori (strain ATCC 700392 / 26695) (Campylobacter pylori)).